Consider the following 568-residue polypeptide: Protein phosphatase 1 regulatory inhibitor subunit 16B (568 aa).

A coiled-coil region spans residues 15–55 (EKVPTLERLRAAQKRRAQQLKKWAQYEQDLQHRKRKHERKR). Residue serine 69 is modified to Phosphoserine. 4 ANK repeats span residues 100 to 129 (DGLTALHQCCIDNFEEIVKLLLSHGANVNA), 133 to 162 (ELWTPLHAAATCGHINLVKILVQYGADLLA), 228 to 257 (QGATLLHIAGANGYLRAAELLLDHGVRVDV), and 261 to 290 (DGWEPLHAAAFWGQMQMAELLVSHGASLSA). A disordered region spans residues 327–346 (RHKSSLSRRTSSAGSRGKVV). A phosphoserine mark is found at serine 333, serine 337, and serine 350. Over residues 333 to 342 (SRRTSSAGSR) the composition is skewed to low complexity. Positions 373-404 (SASEDQRNSTYNGDIRETRTDQENKDPNPRLE) are disordered. A compositionally biased stretch (basic and acidic residues) spans 386 to 404 (DIRETRTDQENKDPNPRLE). Serine 477 carries the post-translational modification Phosphoserine. Residues 504–525 (GSGVSRTGEGSSEGKAPLIGGR) form a disordered region. One copy of the ANK 5 repeat lies at 531–560 (SNGTSVYYTVTSGDPPLLKFKAPIEEMEEK). A lipid anchor (S-palmitoyl cysteine) is attached at cysteine 564. Position 565 is a cysteine methyl ester (cysteine 565). Cysteine 565 carries S-farnesyl cysteine lipidation. Positions 566-568 (RIS) are cleaved as a propeptide — removed in mature form.

As to quaternary structure, interacts with PPP1CA, PPP1CB and MSN. Interacts (via its fourth ankyrin repeat) with the mature dimeric form of RPSA/LAMR1. Interacts with EEF1A1. Interacts with PTEN. Interacts with ECE1. Post-translationally, phosphorylated by PKA and, after PKA priming, by GSK3B. Phosphorylation by GSK3B reduces its association with PP1C and enhances PP1C activity. Dephosphorylation by its associated PP1C results in enhanced association with PP1C, but reduced PP1C activity.

Its subcellular location is the cell membrane. The protein resides in the nucleus. The protein localises to the cell projection. Regulator of protein phosphatase 1 (PP1) that acts as a positive regulator of pulmonary endothelial cell (EC) barrier function. Protects the endothelial barrier from lipopolysaccharide (LPS)-induced vascular leakage. Involved in the regulation of the PI3K/AKT signaling pathway. Involved in the regulation of angiogenesis and endothelial cell proliferation through the control of ECE1 dephosphorylation, trafficking and activity. Involved in the regulation of endothelial cell filopodia extension. May be a downstream target for TGF-beta1 signaling cascade in endothelial cells. Involved in PKA-mediated moesin dephosphorylation which is important in EC barrier protection against thrombin stimulation. Promotes the interaction of PPP1CA with RPSA/LAMR1 and in turn facilitates the dephosphorylation of RPSA/LAMR1. Involved in the dephosphorylation of EEF1A1. The chain is Protein phosphatase 1 regulatory inhibitor subunit 16B (PPP1R16B) from Bos taurus (Bovine).